We begin with the raw amino-acid sequence, 359 residues long: Methionine import ATP-binding protein MetN (359 aa).

A disordered region spans residues Met1 to Gly21. The 241-residue stretch at Val24 to Val264 folds into the ABC transporter domain. ATP is bound at residue Gly61–Ser68.

The protein belongs to the ABC transporter superfamily. Methionine importer (TC 3.A.1.24) family. In terms of assembly, the complex is composed of two ATP-binding proteins (MetN), two transmembrane proteins (MetI) and a solute-binding protein (MetQ).

It is found in the cell membrane. The enzyme catalyses L-methionine(out) + ATP + H2O = L-methionine(in) + ADP + phosphate + H(+). It carries out the reaction D-methionine(out) + ATP + H2O = D-methionine(in) + ADP + phosphate + H(+). Its function is as follows. Part of the ABC transporter complex MetNIQ involved in methionine import. Responsible for energy coupling to the transport system. The polypeptide is Methionine import ATP-binding protein MetN (Corynebacterium efficiens (strain DSM 44549 / YS-314 / AJ 12310 / JCM 11189 / NBRC 100395)).